The primary structure comprises 467 residues: Gamma-aminobutyric acid receptor subunit gamma-2 (467 aa).

The signal sequence occupies residues 1–39; that stretch reads MSSPNIWSTGSSVYSTPVFSQKMTVWILLLLSLYPGFTS. The Extracellular portion of the chain corresponds to 40–275; sequence QKSDDDYEDY…FDLSRRMGYF (236 aa). 2 N-linked (GlcNAc...) asparagine glycosylation sites follow: Asn-52 and Asn-129. Cys-190 and Cys-204 form a disulfide bridge. An N-linked (GlcNAc...) asparagine glycan is attached at Asn-247. Residues 276–296 traverse the membrane as a helical segment; it reads TIQTYIPCTLIVVLSWVSFWI. Topologically, residues 297 to 302 are cytoplasmic; it reads NKDAVP. Residues 303–322 form a helical membrane-spanning segment; it reads ARTSLGITTVLTMTTLSTIA. Over 323 to 334 the chain is Extracellular; it reads RKSLPKVSYVTA. The helical transmembrane segment at 335–359 threads the bilayer; that stretch reads MDLFVSVCFIFVFSALVEYGTLHYF. Residues 360-443 lie on the Cytoplasmic side of the membrane; that stretch reads VSNRKPSKDK…IHIRIAKMDS (84 aa). The interaction with GABARAP stretch occupies residues 425–442; the sequence is RTGAWRHGRIHIRIAKMD. The chain crosses the membrane as a helical span at residues 444–464; that stretch reads YARIFFPTAFCLFNLVYWVSY. At 465 to 467 the chain is on the extracellular side; that stretch reads LYL.

Belongs to the ligand-gated ion channel (TC 1.A.9) family. Gamma-aminobutyric acid receptor (TC 1.A.9.5) subfamily. GABRG2 sub-subfamily. As to quaternary structure, heteropentamer, formed by a combination of alpha (GABRA1-6), beta (GABRB1-3), gamma (GABRG1-3), delta (GABRD), epsilon (GABRE), rho (GABRR1-3), pi (GABRP) and theta (GABRQ) chains, each subunit exhibiting distinct physiological and pharmacological properties. Interacts with GABARAP. Interacts with KIF21B. Identified in a complex of 720 kDa composed of LHFPL4, NLGN2, GABRA1, GABRB2, GABRG2 and GABRB3. Interacts with LHFPL4. Interacts with SHISA7; interaction leads to the regulation of GABA(A) receptor trafficking, channel deactivation kinetics and pharmacology. In terms of processing, palmitoylated by ZDHHC3/GODZ; required for the accumulation of GABA(A) receptors at the postsynaptic membrane of inhibitory GABAergic synapses. Post-translationally, glycosylated.

Its subcellular location is the postsynaptic cell membrane. It localises to the cell membrane. The protein resides in the cell projection. It is found in the dendrite. The protein localises to the cytoplasmic vesicle membrane. The enzyme catalyses chloride(in) = chloride(out). Allosterically activated by benzodiazepines. Activated by pentobarbital. Inhibited by the antagonist bicuculline. Inhibited by zinc ions. Potentiated by histamine. In terms of biological role, gamma subunit of the heteropentameric ligand-gated chloride channel gated by gamma-aminobutyric acid (GABA), a major inhibitory neurotransmitter in the brain. GABA-gated chloride channels, also named GABA(A) receptors (GABAAR), consist of five subunits arranged around a central pore and contain GABA active binding site(s) located at the alpha and beta subunit interface(s). When activated by GABA, GABAARs selectively allow the flow of chloride anions across the cell membrane down their electrochemical gradient. Gamma-2/GABRG2-containing GABAARs are found at both synaptic and extrasynaptic sites. Chloride influx into the postsynaptic neuron following GABAAR opening decreases the neuron ability to generate a new action potential, thereby reducing nerve transmission. GABAARs containing alpha-1 and beta-2 or -3 subunits exhibit synaptogenic activity; the gamma-2 subunit being necessary but not sufficient to induce rapid synaptic contacts formation. Extrasynaptic gamma-2-containing receptors contribute to the tonic GABAergic inhibition. GABAARs function also as histamine receptor where histamine binds at the interface of two neighboring beta subunits and potentiates GABA response in a gamma-2 subunit-controlled manner. This is Gamma-aminobutyric acid receptor subunit gamma-2 (GABRG2) from Pongo abelii (Sumatran orangutan).